Consider the following 148-residue polypeptide: EITTFAALTERFNLPNGNYQRPKLLYCSNGGHFLRILPDGKVDGTRDRSDPYIQLQFYAESVGEVYIKSLETGQYLAMDSDGRLYASQSPSEECLFLERLEENHYNTYKSKMHADKDWFVGIKKNGKTKLGSRTHFGQKAILFLPLPV.

The propeptide occupies 1 to 11 (EITTFAALTER). Residue Asn29 participates in heparin binding. Residues 123–139 (KKNGKTKLGSRTHFGQK) form a heparin-binding region.

The protein belongs to the heparin-binding growth factors family.

It is found in the secreted. The protein resides in the cytoplasm. Its subcellular location is the cell cortex. It localises to the cytosol. The protein localises to the nucleus. Functionally, plays an important role in the regulation of cell survival, cell division, angiogenesis, cell differentiation and cell migration. Functions as a potent mitogen in vitro. Acts as a ligand for FGFR1 and integrins. Binds to FGFR1 in the presence of heparin leading to FGFR1 dimerization and activation via sequential autophosphorylation on tyrosine residues which act as docking sites for interacting proteins, leading to the activation of several signaling cascades. Binds to integrins. Its binding to integrins and subsequent ternary complex formation with integrins and FGFR1 are essential for FGF1 signaling. This chain is Fibroblast growth factor 1 (fgf1), found in Cynops pyrrhogaster (Japanese fire-bellied newt).